Consider the following 252-residue polypeptide: Protein PYRAB15930 (252 aa).

It belongs to the CinA family.

The protein is Protein PYRAB15930 of Pyrococcus abyssi (strain GE5 / Orsay).